The chain runs to 848 residues: Alanine--tRNA ligase (848 aa).

4 residues coordinate Zn(2+): H553, H557, C654, and H658.

This sequence belongs to the class-II aminoacyl-tRNA synthetase family. It depends on Zn(2+) as a cofactor.

It is found in the cytoplasm. It carries out the reaction tRNA(Ala) + L-alanine + ATP = L-alanyl-tRNA(Ala) + AMP + diphosphate. Its function is as follows. Catalyzes the attachment of alanine to tRNA(Ala) in a two-step reaction: alanine is first activated by ATP to form Ala-AMP and then transferred to the acceptor end of tRNA(Ala). Also edits incorrectly charged Ser-tRNA(Ala) and Gly-tRNA(Ala) via its editing domain. This is Alanine--tRNA ligase from Neorickettsia sennetsu (strain ATCC VR-367 / Miyayama) (Ehrlichia sennetsu).